The chain runs to 417 residues: Peptide chain release factor subunit 1 (417 aa).

Belongs to the eukaryotic release factor 1 family. In terms of assembly, heterodimer of two subunits, one of which binds GTP.

The protein resides in the cytoplasm. In terms of biological role, directs the termination of nascent peptide synthesis (translation) in response to the termination codons UAA, UAG and UGA. This is Peptide chain release factor subunit 1 (prf1) from Thermoplasma acidophilum (strain ATCC 25905 / DSM 1728 / JCM 9062 / NBRC 15155 / AMRC-C165).